The following is a 427-amino-acid chain: Enolase (427 aa).

Q163 lines the (2R)-2-phosphoglycerate pocket. The Proton donor role is filled by E205. Residues D242, E285, and D312 each contribute to the Mg(2+) site. K337, R366, S367, and K388 together coordinate (2R)-2-phosphoglycerate. The Proton acceptor role is filled by K337.

The protein belongs to the enolase family. Mg(2+) serves as cofactor.

Its subcellular location is the cytoplasm. It localises to the secreted. The protein localises to the cell surface. It carries out the reaction (2R)-2-phosphoglycerate = phosphoenolpyruvate + H2O. It participates in carbohydrate degradation; glycolysis; pyruvate from D-glyceraldehyde 3-phosphate: step 4/5. Functionally, catalyzes the reversible conversion of 2-phosphoglycerate (2-PG) into phosphoenolpyruvate (PEP). It is essential for the degradation of carbohydrates via glycolysis. The sequence is that of Enolase from Burkholderia multivorans (strain ATCC 17616 / 249).